We begin with the raw amino-acid sequence, 81 residues long: Photosystem I iron-sulfur center (81 aa).

2 4Fe-4S ferredoxin-type domains span residues Ala-2–Trp-31 and Met-39–Tyr-68. Cys-11, Cys-14, Cys-17, Cys-21, Cys-48, Cys-51, Cys-54, and Cys-58 together coordinate [4Fe-4S] cluster.

In terms of assembly, the eukaryotic PSI reaction center is composed of at least 11 subunits. It depends on [4Fe-4S] cluster as a cofactor.

It is found in the plastid. The protein localises to the chloroplast thylakoid membrane. The catalysed reaction is reduced [plastocyanin] + hnu + oxidized [2Fe-2S]-[ferredoxin] = oxidized [plastocyanin] + reduced [2Fe-2S]-[ferredoxin]. Its function is as follows. Apoprotein for the two 4Fe-4S centers FA and FB of photosystem I (PSI); essential for photochemical activity. FB is the terminal electron acceptor of PSI, donating electrons to ferredoxin. The C-terminus interacts with PsaA/B/D and helps assemble the protein into the PSI complex. Required for binding of PsaD and PsaE to PSI. PSI is a plastocyanin/cytochrome c6-ferredoxin oxidoreductase, converting photonic excitation into a charge separation, which transfers an electron from the donor P700 chlorophyll pair to the spectroscopically characterized acceptors A0, A1, FX, FA and FB in turn. This Cyanidioschyzon merolae (strain NIES-3377 / 10D) (Unicellular red alga) protein is Photosystem I iron-sulfur center.